A 187-amino-acid polypeptide reads, in one-letter code: Cell division protein SepF (187 aa).

A disordered region spans residues 13–74 (GLAEDDRYAE…PAPATTAQVT (62 aa)). Positions 16 to 65 (EDDRYAEDTEPETTRPRVEAAREVRVESRHEARPEVRHEPRPEVSVERRP) are enriched in basic and acidic residues.

The protein belongs to the SepF family. Homodimer. Interacts with FtsZ.

The protein resides in the cytoplasm. Cell division protein that is part of the divisome complex and is recruited early to the Z-ring. Probably stimulates Z-ring formation, perhaps through the cross-linking of FtsZ protofilaments. Its function overlaps with FtsA. This is Cell division protein SepF from Kineococcus radiotolerans (strain ATCC BAA-149 / DSM 14245 / SRS30216).